The sequence spans 346 residues: Glucose-6-phosphatase 3 (346 aa).

Over 1–25 (MESTLSAGIMMAEALQNQLPGLENM) the chain is Lumenal. The chain crosses the membrane as a helical span at residues 26–46 (WLWVTFLADPKNLFQFYFPAV). The Cytoplasmic segment spans residues 47–56 (YYASRRLGIS). The helical transmembrane segment at 57-77 (LFWIAFITEWLNLVFKWFLFG) threads the bilayer. The Lumenal segment spans residues 78–115 (DRPFWWVHESGYSAQTPVQIHQFPSSCETGPGSPSGHC). Residue Arg79 participates in substrate binding. His114 (proton donor) is an active-site residue. A helical transmembrane segment spans residues 116-135 (MITGAALWPVMIAISSQVAS). The Cytoplasmic segment spans residues 136-140 (QTRSP). The helical transmembrane segment at 141–162 (WVRVIPGLAYCTFLLAVGLSRV) threads the bilayer. Arg161 contributes to the substrate binding site. The Lumenal portion of the chain corresponds to 163–167 (FLLAH). The active-site Nucleophile is the His167. A helical transmembrane segment spans residues 168–186 (FPHQVLAGLLAGVILGWLL). The Cytoplasmic portion of the chain corresponds to 187–197 (SPRVPMERELS). The chain crosses the membrane as a helical span at residues 198-218 (FYGLTALTLMLGASLMYWTLF). At 219–254 (TLGLDLSWSINLASKWCDRPEWVLVDSRPFASLSRD) the chain is on the lumenal side. Residues 255–273 (SGSALGLGIALHTPCYAQI) form a helical membrane-spanning segment. The Cytoplasmic portion of the chain corresponds to 274–283 (RRVHLGNGQK). The helical transmembrane segment at 284–304 (IACFVLAMGLLVFLEWLGHPP) threads the bilayer. Topologically, residues 305–307 (QIS) are lumenal. Residues 308–328 (LFYIFNFLKFTLWPCLVVALV) traverse the membrane as a helical segment. At 329–346 (PWMVHTLSAQEAPPIRSS) the chain is on the cytoplasmic side.

Belongs to the glucose-6-phosphatase family. Expressed in liver and kidney. It is the major glucose-6-phosphatase expressed in the small intestine.

The protein resides in the endoplasmic reticulum membrane. The catalysed reaction is D-glucose 6-phosphate + H2O = D-glucose + phosphate. It functions in the pathway carbohydrate biosynthesis; gluconeogenesis. Inhibited by vanadate. Hydrolyzes glucose-6-phosphate to glucose in the endoplasmic reticulum. May form with the glucose-6-phosphate transporter (SLC37A4/G6PT) a ubiquitously expressed complex responsible for glucose production through glycogenolysis and gluconeogenesis. Probably required for normal neutrophil function. The protein is Glucose-6-phosphatase 3 (G6pc3) of Rattus norvegicus (Rat).